The sequence spans 576 residues: Potassium-transporting ATPase potassium-binding subunit (576 aa).

A run of 12 helical transmembrane segments spans residues 4-24 (QAWI…WPLG), 65-85 (AYAL…YALQ), 136-156 (ALGV…FALI), 179-199 (VYVL…QGVI), 257-277 (LSNF…VFAF), 288-308 (GALL…VTSL), 341-361 (FGIA…CGAV), 371-391 (LGGA…GGVG), 393-413 (GLYG…LMIG), 430-450 (MTAV…AVAL), 497-517 (LLLA…VLAI), and 540-560 (LFVV…YVPA).

Belongs to the KdpA family. In terms of assembly, the system is composed of three essential subunits: KdpA, KdpB and KdpC.

The protein localises to the cell inner membrane. In terms of biological role, part of the high-affinity ATP-driven potassium transport (or Kdp) system, which catalyzes the hydrolysis of ATP coupled with the electrogenic transport of potassium into the cytoplasm. This subunit binds the periplasmic potassium ions and delivers the ions to the membrane domain of KdpB through an intramembrane tunnel. The polypeptide is Potassium-transporting ATPase potassium-binding subunit (Methylibium petroleiphilum (strain ATCC BAA-1232 / LMG 22953 / PM1)).